The chain runs to 90 residues: MVKSSFISIISQEDKKENKGSVEFQIVSFTNKIRRLTSHLELHRKDYLSQRGLRKILGKRQRLLSYLAKKNGVRYKELISQLNIRESKTR.

It belongs to the universal ribosomal protein uS15 family. As to quaternary structure, part of the 30S ribosomal subunit.

The protein resides in the plastid. The protein localises to the chloroplast. The polypeptide is Small ribosomal subunit protein uS15c (rps15) (Populus alba (White poplar)).